Here is a 124-residue protein sequence, read N- to C-terminus: Fluoride-specific ion channel FluC (124 aa).

4 helical membrane-spanning segments follow: residues valine 3 to leucine 23, isoleucine 34 to isoleucine 54, leucine 68 to phenylalanine 88, and alanine 100 to isoleucine 120. Na(+) contacts are provided by glycine 75 and threonine 78.

Belongs to the fluoride channel Fluc/FEX (TC 1.A.43) family.

The protein resides in the cell inner membrane. It carries out the reaction fluoride(in) = fluoride(out). Na(+) is not transported, but it plays an essential structural role and its presence is essential for fluoride channel function. Fluoride-specific ion channel. Important for reducing fluoride concentration in the cell, thus reducing its toxicity. This chain is Fluoride-specific ion channel FluC, found in Coxiella burnetii (strain Dugway 5J108-111).